A 142-amino-acid polypeptide reads, in one-letter code: Large ribosomal subunit protein uL13 (142 aa).

Belongs to the universal ribosomal protein uL13 family. As to quaternary structure, part of the 50S ribosomal subunit.

Functionally, this protein is one of the early assembly proteins of the 50S ribosomal subunit, although it is not seen to bind rRNA by itself. It is important during the early stages of 50S assembly. This is Large ribosomal subunit protein uL13 from Yersinia enterocolitica serotype O:8 / biotype 1B (strain NCTC 13174 / 8081).